Reading from the N-terminus, the 243-residue chain is Juxtaposed with another zinc finger protein 1 (243 aa).

The C2H2-type 1 zinc finger occupies 12–37 (NTCRFGGCGLHFPTLADLIEHIEDNH). Residues 39–79 (DTDPRVLEKQELQQPTYVALSYINRFMTDAARREQESLKKK) are required for interaction with NR2C2. Residues 89–108 (SSSVSRGNVSTPPRHSSGSL) are compositionally biased toward polar residues. The segment at 89-151 (SSSVSRGNVS…SDSDESWTTE (63 aa)) is disordered. Phosphothreonine is present on residues Thr-109 and Thr-113. Residues 118–130 (PSSSFRSSTPTGS) are compositionally biased toward low complexity. Positions 131–148 (EYDEEEVDYEESDSDESW) are enriched in acidic residues. The segment at 173–198 (FACPVPGCKKRYKNVNGIKYHAKNGH) adopts a C2H2-type 2 zinc-finger fold. A C2H2-type 3; degenerate zinc finger spans residues 208–230 (FKCRCGKSYKTAQGLRHHTINFH).

In terms of assembly, interacts with NR2C2 (via ligand-binding region). Highest expression in testis with moderate levels in colon, placenta, prostate and ovary and low levels in brain, spleen, liver and small intestine.

The protein resides in the nucleus. Its function is as follows. Acts as a transcriptional corepressor of orphan nuclear receptor NR2C2. Inhibits expression of the gluconeogenesis enzyme PCK2 through inhibition of NR2C2 activity. Also involved in transcriptional activation of NAMPT by promoting expression of PPARA and PPARD. Plays a role in lipid metabolism by suppressing lipogenesis, increasing lipolysis and decreasing lipid accumulation in adipose tissue. Plays a role in glucose homeostasis by improving glucose metabolism and insulin sensitivity. This Homo sapiens (Human) protein is Juxtaposed with another zinc finger protein 1.